The following is a 302-amino-acid chain: Myeloid-associated differentiation marker-like protein 2 (302 aa).

2 MARVEL domains span residues 13 to 149 and 154 to 298; these read AIWS…AKPG and YMAT…RLRI. 7 consecutive transmembrane segments (helical) span residues 45 to 65, 87 to 107, 124 to 144, 158 to 178, 191 to 211, 225 to 245, and 273 to 293; these read AYGT…ILIV, AYAM…PMYF, LAVS…VFLT, ASGL…GALA, WCVA…ILNI, FVVI…VIWP, and LAVT…LIYT.

Belongs to the MAL family.

It is found in the membrane. This is Myeloid-associated differentiation marker-like protein 2 (myadml2) from Xenopus laevis (African clawed frog).